Reading from the N-terminus, the 252-residue chain is Imidazole glycerol phosphate synthase subunit HisF (252 aa).

Catalysis depends on residues Asp11 and Asp130.

This sequence belongs to the HisA/HisF family. Heterodimer of HisH and HisF.

The protein resides in the cytoplasm. The catalysed reaction is 5-[(5-phospho-1-deoxy-D-ribulos-1-ylimino)methylamino]-1-(5-phospho-beta-D-ribosyl)imidazole-4-carboxamide + L-glutamine = D-erythro-1-(imidazol-4-yl)glycerol 3-phosphate + 5-amino-1-(5-phospho-beta-D-ribosyl)imidazole-4-carboxamide + L-glutamate + H(+). Its pathway is amino-acid biosynthesis; L-histidine biosynthesis; L-histidine from 5-phospho-alpha-D-ribose 1-diphosphate: step 5/9. In terms of biological role, IGPS catalyzes the conversion of PRFAR and glutamine to IGP, AICAR and glutamate. The HisF subunit catalyzes the cyclization activity that produces IGP and AICAR from PRFAR using the ammonia provided by the HisH subunit. In Hyphomonas neptunium (strain ATCC 15444), this protein is Imidazole glycerol phosphate synthase subunit HisF.